Here is a 192-residue protein sequence, read N- to C-terminus: Ribosomal RNA large subunit methyltransferase E (192 aa).

G46, W48, D63, D79, and D102 together coordinate S-adenosyl-L-methionine. The Proton acceptor role is filled by K142.

It belongs to the class I-like SAM-binding methyltransferase superfamily. RNA methyltransferase RlmE family.

Its subcellular location is the cytoplasm. It catalyses the reaction uridine(2552) in 23S rRNA + S-adenosyl-L-methionine = 2'-O-methyluridine(2552) in 23S rRNA + S-adenosyl-L-homocysteine + H(+). Specifically methylates the uridine in position 2552 of 23S rRNA at the 2'-O position of the ribose in the fully assembled 50S ribosomal subunit. The protein is Ribosomal RNA large subunit methyltransferase E of Wolbachia pipientis wMel.